Consider the following 704-residue polypeptide: MQDERPVDQLTEAEAATELARLAEAIEAANTAYHTHDAPQISDADYDALKLRNRAIEEQFPELRRSDSPSDRVGGALAEGFAKVRHEVRMLSLENAFDLAEVEDWIERIRRYLGHVGDLLFTAEPKIDGLSLSLRYEKGRLVQAATRGDGETGENVTENARTIADLPTELDGAPDLLEVRGEVYMSHEDFAALNGRQEAAGQRLFANPRNAAAGSLRQLDPAVTASRPLRFFAYAWGAHSEPLAATQHEAIARLAALGFATNPLTRLCTGPEELLAQHAEIERQRAALGYDIDGVVYKVDDLALQRRLGFRASTPRWAIAHKFAAQLAWTQLEGIDIQVGRTGALSPVARLKPVTVGGVVVANATLHNEDYIAGRDSKGQEIRGGKDIRVGDWVQVYRAGDVIPKVADVDLDRRPEGAARYRFPETCPECGSEAIREPGDSVRRCTGGLICPAQQVERLKHFVSRAAFDIEGLGAKQVEALWRDGWIRQPADIFELPNRYREGIQRLENREGWGRKSAENLFAAIEARRRIALHRLIFALGIRHVGETTATLLATHYGSWAAFEAAMTRAEVGAGPEWQDLLSIDGVGAVLATSLVTAFHQEAERAAVDALAAHLTVEDAEVRAPVASPVAGKIVVFTGTLEKMSRAEAKARAEALGAKVSGSVSARTDVVVAGPGAGSKAKQAAALGIETIDEDGWLRLIGDA.

Residues 43–47, 92–93, and Glu-124 each bind NAD(+); these read DADYD and SL. The N6-AMP-lysine intermediate role is filled by Lys-126. NAD(+) is bound by residues Arg-147, Glu-182, Lys-298, and Lys-322. Cys-427, Cys-430, Cys-445, and Cys-451 together coordinate Zn(2+). The BRCT domain occupies 625–704; sequence PVASPVAGKI…DGWLRLIGDA (80 aa).

It belongs to the NAD-dependent DNA ligase family. LigA subfamily. The cofactor is Mg(2+). Mn(2+) serves as cofactor.

It catalyses the reaction NAD(+) + (deoxyribonucleotide)n-3'-hydroxyl + 5'-phospho-(deoxyribonucleotide)m = (deoxyribonucleotide)n+m + AMP + beta-nicotinamide D-nucleotide.. Its function is as follows. DNA ligase that catalyzes the formation of phosphodiester linkages between 5'-phosphoryl and 3'-hydroxyl groups in double-stranded DNA using NAD as a coenzyme and as the energy source for the reaction. It is essential for DNA replication and repair of damaged DNA. In Cereibacter sphaeroides (strain ATCC 17029 / ATH 2.4.9) (Rhodobacter sphaeroides), this protein is DNA ligase.